Reading from the N-terminus, the 175-residue chain is Disulfide bond formation protein B (175 aa).

The Cytoplasmic portion of the chain corresponds to 1-13 (MSKLVTFSQQRSA). The helical transmembrane segment at 14–30 (WLILMFSALGLEASALY) threads the bilayer. Over 31–48 (FQYVMLLDPCVMCIYIRV) the chain is Periplasmic. A disulfide bridge links cysteine 40 with cysteine 43. Residues 49 to 64 (AVLGLILAGLVGSIAP) traverse the membrane as a helical segment. The Cytoplasmic segment spans residues 65 to 71 (RFWIVRF). Residues 72–89 (LGMSLWGVSSAWGAKLSF) form a helical membrane-spanning segment. The Periplasmic portion of the chain corresponds to 90–144 (ELYQMQANPSPFSTCSFYPEFPTWMPLDAWMPSIFMPTGMCSDIPWTMMSLSMTQ). Residues cysteine 104 and cysteine 130 are joined by a disulfide bond. Residues 145 to 163 (WTLIAFVGYSIAFLLFIYP) traverse the membrane as a helical segment. The Cytoplasmic segment spans residues 164–175 (GLLYKKPTNPYS).

This sequence belongs to the DsbB family.

It is found in the cell inner membrane. Required for disulfide bond formation in some periplasmic proteins. Acts by oxidizing the DsbA protein. This is Disulfide bond formation protein B from Shewanella denitrificans (strain OS217 / ATCC BAA-1090 / DSM 15013).